The sequence spans 450 residues: Glucose-6-phosphate isomerase (450 aa).

Catalysis depends on Glu291, which acts as the Proton donor. Catalysis depends on residues His312 and Lys426.

This sequence belongs to the GPI family.

The protein resides in the cytoplasm. The catalysed reaction is alpha-D-glucose 6-phosphate = beta-D-fructose 6-phosphate. It participates in carbohydrate biosynthesis; gluconeogenesis. Its pathway is carbohydrate degradation; glycolysis; D-glyceraldehyde 3-phosphate and glycerone phosphate from D-glucose: step 2/4. In terms of biological role, catalyzes the reversible isomerization of glucose-6-phosphate to fructose-6-phosphate. The polypeptide is Glucose-6-phosphate isomerase (Clostridium botulinum (strain Hall / ATCC 3502 / NCTC 13319 / Type A)).